Reading from the N-terminus, the 156-residue chain is Small ribosomal subunit protein uS7 (156 aa).

The protein belongs to the universal ribosomal protein uS7 family. In terms of assembly, part of the 30S ribosomal subunit. Contacts proteins S9 and S11.

One of the primary rRNA binding proteins, it binds directly to 16S rRNA where it nucleates assembly of the head domain of the 30S subunit. Is located at the subunit interface close to the decoding center, probably blocks exit of the E-site tRNA. This Streptococcus pyogenes serotype M1 protein is Small ribosomal subunit protein uS7.